A 116-amino-acid polypeptide reads, in one-letter code: Ino eighty subunit 4 (116 aa).

Residues 1 to 15 are compositionally biased toward low complexity; that stretch reads MSQESSVLSESQEQL. 2 disordered regions span residues 1–40 and 70–116; these read MSQE…PVLP and EERQ…GLDS. The span at 84-108 shows a compositional bias: basic and acidic residues; that stretch reads KGSDDKATRKKEPADEDPEVKQLEK.

Component of the chromatin-remodeling INO80 complex, at least composed of ARP4, ARP5, ARP8, RVB1, RVB2, TAF14, NHP10, IES1, IES3, IES4, IES6, ACT1, IES2, IES5 and INO80.

Its subcellular location is the nucleus. This is Ino eighty subunit 4 (IES4) from Saccharomyces cerevisiae (strain ATCC 204508 / S288c) (Baker's yeast).